The primary structure comprises 237 residues: Adenosine 5'-phosphosulfate reductase (237 aa).

Residues Cys-123, Cys-124, Cys-206, and Cys-209 each contribute to the [4Fe-4S] cluster site. Catalysis depends on Cys-232, which acts as the Nucleophile; cysteine thiosulfonate intermediate.

It belongs to the PAPS reductase family. CysH subfamily. [4Fe-4S] cluster is required as a cofactor.

It localises to the cytoplasm. It carries out the reaction [thioredoxin]-disulfide + sulfite + AMP + 2 H(+) = adenosine 5'-phosphosulfate + [thioredoxin]-dithiol. The protein operates within sulfur metabolism; hydrogen sulfide biosynthesis; sulfite from sulfate. Its function is as follows. Catalyzes the formation of sulfite from adenosine 5'-phosphosulfate (APS) using thioredoxin as an electron donor. In Mycobacteroides abscessus (strain ATCC 19977 / DSM 44196 / CCUG 20993 / CIP 104536 / JCM 13569 / NCTC 13031 / TMC 1543 / L948) (Mycobacterium abscessus), this protein is Adenosine 5'-phosphosulfate reductase.